We begin with the raw amino-acid sequence, 241 residues long: 1-(5-phosphoribosyl)-5-[(5-phosphoribosylamino)methylideneamino] imidazole-4-carboxamide isomerase (241 aa).

Asp8 serves as the catalytic Proton acceptor. The Proton donor role is filled by Asp130.

Belongs to the HisA/HisF family.

The protein localises to the cytoplasm. The catalysed reaction is 1-(5-phospho-beta-D-ribosyl)-5-[(5-phospho-beta-D-ribosylamino)methylideneamino]imidazole-4-carboxamide = 5-[(5-phospho-1-deoxy-D-ribulos-1-ylimino)methylamino]-1-(5-phospho-beta-D-ribosyl)imidazole-4-carboxamide. It participates in amino-acid biosynthesis; L-histidine biosynthesis; L-histidine from 5-phospho-alpha-D-ribose 1-diphosphate: step 4/9. This is 1-(5-phosphoribosyl)-5-[(5-phosphoribosylamino)methylideneamino] imidazole-4-carboxamide isomerase from Francisella philomiragia subsp. philomiragia (strain ATCC 25017 / CCUG 19701 / FSC 153 / O#319-036).